Reading from the N-terminus, the 234-residue chain is Glucosamine-6-phosphate deaminase (234 aa).

Catalysis depends on aspartate 62, which acts as the Proton acceptor; for enolization step. Catalysis depends on asparagine 128, which acts as the For ring-opening step. Histidine 130 functions as the Proton acceptor; for ring-opening step in the catalytic mechanism. The active-site For ring-opening step is glutamate 135.

Belongs to the glucosamine/galactosamine-6-phosphate isomerase family. NagB subfamily.

The catalysed reaction is alpha-D-glucosamine 6-phosphate + H2O = beta-D-fructose 6-phosphate + NH4(+). It participates in amino-sugar metabolism; N-acetylneuraminate degradation; D-fructose 6-phosphate from N-acetylneuraminate: step 5/5. Functionally, catalyzes the reversible isomerization-deamination of glucosamine 6-phosphate (GlcN6P) to form fructose 6-phosphate (Fru6P) and ammonium ion. In Lactobacillus delbrueckii subsp. bulgaricus (strain ATCC 11842 / DSM 20081 / BCRC 10696 / JCM 1002 / NBRC 13953 / NCIMB 11778 / NCTC 12712 / WDCM 00102 / Lb 14), this protein is Glucosamine-6-phosphate deaminase.